A 689-amino-acid polypeptide reads, in one-letter code: MVLKEPPAERIQQLRRLLQRASYAYYALDQPIMEDEVYDQLYRELQELEAAYPEYITPDSPTQRIGEAPVSQFESVSHRIPLYSLENAFTFADMVAWQERWQRYWRTLRQEEPLPPAEYVCELKMDGVALALTYENGLLVRGATRGDGQRGEDVTSNVRTIRPIPLRLALDNPPPVVEVRGEAFLPLERFHQLNQERQAQGEPPFANPRNAAAGTLRQLDPRIVAQRQLDFFAYALHLPEGGSVPLGENQAGEPQSQRQVLYALQHLGFRVNPHHADCPDLEAVKAYYDRWQTARHQLPYLTDGIVVKLNDLKLQQTLGFTQKFPRGSIAWKYEPEQAITDVLAITVQVGRTGALTPVAELAPVQLAGTTVSRATLHNADYIAELDLHIGDKVVIHKAGEIIPEIVRVFPELRPPTARPFTMPTACPECHQPVVRPANEAVSRCGNPRCPAIVRGQIRHWASRDALDIQGLGEKLVQQLVTKELVRTPADLYRLTAAQLLSLERMGQKSADKLLVAIANSKQQPWPRVLYGLGIRHVGSVNAQLLADRFKSVEELATATVADLCGVDGIGEEIAQAVQEWFQDPDHQSLIADLQALGLQLAAALHPAQKALTTEKSLNGKRFVITGTLPTLTREQAKALIQKHGGHVSESVSRQTDYLVVGEKAGSKLRRAQELGIPCINETELIQMCR.

Residues 35–39 (DEVYD), 84–85 (SL), and E122 contribute to the NAD(+) site. Residue K124 is the N6-AMP-lysine intermediate of the active site. Residues R145, E182, K308, and K332 each coordinate NAD(+). Zn(2+) is bound by residues C426, C429, C444, and C449. One can recognise a BRCT domain in the interval 612–689 (TTEKSLNGKR…NETELIQMCR (78 aa)).

The protein belongs to the NAD-dependent DNA ligase family. LigA subfamily. Requires Mg(2+) as cofactor. Mn(2+) serves as cofactor.

It carries out the reaction NAD(+) + (deoxyribonucleotide)n-3'-hydroxyl + 5'-phospho-(deoxyribonucleotide)m = (deoxyribonucleotide)n+m + AMP + beta-nicotinamide D-nucleotide.. Functionally, DNA ligase that catalyzes the formation of phosphodiester linkages between 5'-phosphoryl and 3'-hydroxyl groups in double-stranded DNA using NAD as a coenzyme and as the energy source for the reaction. It is essential for DNA replication and repair of damaged DNA. This is DNA ligase from Thermosynechococcus vestitus (strain NIES-2133 / IAM M-273 / BP-1).